The primary structure comprises 452 residues: UDP-N-acetylmuramoylalanine--D-glutamate ligase (452 aa).

119–125 is an ATP binding site; sequence GSNGKTT.

This sequence belongs to the MurCDEF family.

Its subcellular location is the cytoplasm. The catalysed reaction is UDP-N-acetyl-alpha-D-muramoyl-L-alanine + D-glutamate + ATP = UDP-N-acetyl-alpha-D-muramoyl-L-alanyl-D-glutamate + ADP + phosphate + H(+). It functions in the pathway cell wall biogenesis; peptidoglycan biosynthesis. Its function is as follows. Cell wall formation. Catalyzes the addition of glutamate to the nucleotide precursor UDP-N-acetylmuramoyl-L-alanine (UMA). The protein is UDP-N-acetylmuramoylalanine--D-glutamate ligase of Streptococcus pyogenes serotype M4 (strain MGAS10750).